Reading from the N-terminus, the 450-residue chain is Salicylate synthase (450 aa).

Glutamate 252 acts as the Proton donor in catalysis. Position 270–271 (270–271 (GT)) interacts with substrate. Mg(2+) is bound at residue glutamate 297. Substrate-binding positions include tyrosine 385, arginine 405, and 419–421 (GAG). Residues glutamate 431 and glutamate 434 each contribute to the Mg(2+) site. Lysine 438 lines the substrate pocket.

Belongs to the anthranilate synthase component I family. Salicylate synthase subfamily. Monomer. Mg(2+) is required as a cofactor.

The enzyme catalyses chorismate = isochorismate. It catalyses the reaction isochorismate = salicylate + pyruvate. The catalysed reaction is chorismate = prephenate. It functions in the pathway siderophore biosynthesis; mycobactin biosynthesis. Involved in the incorporation of salicylate into the virulence-conferring salicylate-based siderophore mycobactin. Catalyzes the initial conversion of chorismate to yield the intermediate isochorismate (isochorismate synthase activity), and the subsequent elimination of the enolpyruvyl side chain in a lyase reaction to give salicylate (isochorismate pyruvate-lyase activity). In the absence of magnesium, MbtI displays a chorismate mutase activity and converts chorismate to prephenate. In Mycobacterium bovis (strain ATCC BAA-935 / AF2122/97), this protein is Salicylate synthase (mbtI).